Reading from the N-terminus, the 249-residue chain is NAD(P)H-quinone oxidoreductase subunit T, chloroplastic (249 aa).

Residues 1-45 constitute a chloroplast transit peptide; that stretch reads MAYATSTYARTSCIILPKIQNGAHFTDDTKAFRRITARRVTRIYA. Residues 44–84 form a disordered region; that stretch reads YASQGPTKPSKPSPGVDTRIHWESPDEGWIGGRSDPAKSVD. The J domain occupies 106–172; sequence SHYQFLGVST…ETRRFYDWTL (67 aa). The chain crosses the membrane as a helical span at residues 224–244; that stretch reads LTFDILIVLFAVCCIAFVIVF.

Part of the chloroplast NDH complex, composed of a mixture of chloroplast and nucleus encoded subunits. Component of the electron donor-binding subcomplex, at least composed of NDHS, NDHT and NDHU.

Its subcellular location is the plastid. It is found in the chloroplast thylakoid membrane. The enzyme catalyses a plastoquinone + NADH + (n+1) H(+)(in) = a plastoquinol + NAD(+) + n H(+)(out). It catalyses the reaction a plastoquinone + NADPH + (n+1) H(+)(in) = a plastoquinol + NADP(+) + n H(+)(out). NDH shuttles electrons from NAD(P)H:plastoquinone, via FMN and iron-sulfur (Fe-S) centers, to quinones in the photosynthetic chain and possibly in a chloroplast respiratory chain. The immediate electron acceptor for the enzyme in this species is believed to be plastoquinone. Couples the redox reaction to proton translocation, and thus conserves the redox energy in a proton gradient. Required for the accumulation of both the NDH subcomplex A and NDHS. The sequence is that of NAD(P)H-quinone oxidoreductase subunit T, chloroplastic from Arabidopsis thaliana (Mouse-ear cress).